Consider the following 348-residue polypeptide: Putative olfactory receptor 3A4 (348 aa).

The Extracellular portion of the chain corresponds to 1–28 (MDLGNSGNDSVVTKFVLLGLTETAALQP). Residue asparagine 8 is glycosylated (N-linked (GlcNAc...) asparagine). A helical membrane pass occupies residues 29–52 (ILFVIFLLAYVTTIGGTLSILAAI). Over 53–60 (LMETKLHS) the chain is Cytoplasmic. Residues 61–82 (PMYFFLGNLSLPDVGCVSVTVP) traverse the membrane as a helical segment. At 83–103 (AMLSHFISNDRSIPYKACLSE) the chain is on the extracellular side. A disulfide bridge connects residues cysteine 100 and cysteine 192. The chain crosses the membrane as a helical span at residues 104 to 123 (LFFFHLLAGADCFLLTIMAY). Over 124–143 (DRYLAICQSLTYSSRMSWGI) the chain is Cytoplasmic. The helical transmembrane segment at 144-161 (QQALVGMSCVFSFTNALT) threads the bilayer. Residues 162–199 (QTVALSPLNFCGPNVINHFYCDLPQPFQLSCSSVHLNG) lie on the Extracellular side of the membrane. The chain crosses the membrane as a helical span at residues 200-222 (QLLFVAAAFMGVAPLVLITVSYA). At 223-239 (HVAAAVLRIRSAEGRKK) the chain is on the cytoplasmic side. Residues 240-262 (AFSTCSSHLTVVGIFYGTGVFSY) form a helical membrane-spanning segment. Residues 263–275 (TRLGSVESSDKDK) lie on the Extracellular side of the membrane. A helical membrane pass occupies residues 276 to 295 (GIGILNTVISPMLNPLIYWT). The Cytoplasmic portion of the chain corresponds to 296 to 348 (SLLDVGCISHCSSDAGVSPGPPVQSSLCCLQFTALLSPPPGWGGLSPLNSHGL).

This sequence belongs to the G-protein coupled receptor 1 family.

The protein localises to the cell membrane. Odorant receptor. This is Putative olfactory receptor 3A4 (OR3A4P) from Homo sapiens (Human).